Consider the following 137-residue polypeptide: Succinate dehydrogenase cytochrome b560 subunit (137 aa).

Helical transmembrane passes span 31–51 (AFLATMVLFSILFFKIGDLSL) and 60–80 (FFFLTFYLNWFIISLVNFTLL). Histidine 85 serves as a coordination point for heme. Residues 106–126 (VYTSGIIMLFCAAFLALLNII) traverse the membrane as a helical segment.

Belongs to the cytochrome b560 family. As to quaternary structure, forms part of complex II containing four subunits: a 70 kDa flavoprotein (FP), a 27 kDa iron-sulfur protein (IP), a cytochrome B and a membrane-anchoring protein. It depends on heme as a cofactor.

The protein localises to the mitochondrion inner membrane. Its pathway is carbohydrate metabolism; tricarboxylic acid cycle. Functionally, membrane-anchoring subunit of succinate dehydrogenase (SDH) that is involved in complex II of the mitochondrial electron transport chain and is responsible for transferring electrons from succinate to ubiquinone (coenzyme Q). This is Succinate dehydrogenase cytochrome b560 subunit (SDH3) from Marchantia polymorpha (Common liverwort).